The chain runs to 380 residues: Cobalt-precorrin-5B C(1)-methyltransferase (380 aa).

The protein belongs to the CbiD family.

The enzyme catalyses Co-precorrin-5B + S-adenosyl-L-methionine = Co-precorrin-6A + S-adenosyl-L-homocysteine. It participates in cofactor biosynthesis; adenosylcobalamin biosynthesis; cob(II)yrinate a,c-diamide from sirohydrochlorin (anaerobic route): step 6/10. Functionally, catalyzes the methylation of C-1 in cobalt-precorrin-5B to form cobalt-precorrin-6A. In Salinispora tropica (strain ATCC BAA-916 / DSM 44818 / JCM 13857 / NBRC 105044 / CNB-440), this protein is Cobalt-precorrin-5B C(1)-methyltransferase.